We begin with the raw amino-acid sequence, 374 residues long: Phospho-N-acetylmuramoyl-pentapeptide-transferase (374 aa).

10 helical membrane-spanning segments follow: residues 3–23 (AVIV…PIAI), 52–72 (MGGV…HLAL), 85–105 (PTIT…VGFI), 125–145 (LLGQ…FPST), 170–190 (IPAL…VVMA), 201–221 (LDGL…LIAF), 244–264 (PLEI…FLWW), 271–291 (IFMG…MAMS), 294–314 (TILL…SVVI), and 350–370 (FWII…SEFL).

The protein belongs to the glycosyltransferase 4 family. MraY subfamily. It depends on Mg(2+) as a cofactor.

It is found in the cell membrane. The catalysed reaction is UDP-N-acetyl-alpha-D-muramoyl-L-alanyl-gamma-D-glutamyl-meso-2,6-diaminopimeloyl-D-alanyl-D-alanine + di-trans,octa-cis-undecaprenyl phosphate = di-trans,octa-cis-undecaprenyl diphospho-N-acetyl-alpha-D-muramoyl-L-alanyl-D-glutamyl-meso-2,6-diaminopimeloyl-D-alanyl-D-alanine + UMP. Its pathway is cell wall biogenesis; peptidoglycan biosynthesis. Catalyzes the initial step of the lipid cycle reactions in the biosynthesis of the cell wall peptidoglycan: transfers peptidoglycan precursor phospho-MurNAc-pentapeptide from UDP-MurNAc-pentapeptide onto the lipid carrier undecaprenyl phosphate, yielding undecaprenyl-pyrophosphoryl-MurNAc-pentapeptide, known as lipid I. This chain is Phospho-N-acetylmuramoyl-pentapeptide-transferase, found in Salinispora arenicola (strain CNS-205).